The primary structure comprises 341 residues: MAKSHTLNPEEEFEEESGLRPSLLSEFIGQKEVLNNLTVYVQAAKNRKRALDHVLISGPPGLGKTTLAGIVSNELGTRLTITSAPVITKGADLARLLTSMGENEILFIDEIHTLHKKLEEILYPAMENYMIDLVIGEGVTAQMVQIPLKPFTLVGATTRSGLISEPLKSRFGIQLRLDYYNDEEMKEIVLRSSRILGVKIEDDAALEIGKRSRKTPRIANHLLKRIRDFSEVEGNLSVKKGLCLKAFEKMGIDDLGLDGMDRQILGCMIDRYKGGPVGLKAIAVVVGEEEKTIEDTYESFMVRIGLINRTPAGRVATEKAYRQLKRMQDFSENHGQDPTLF.

The segment at 1 to 180 (MAKSHTLNPE…FGIQLRLDYY (180 aa)) is large ATPase domain (RuvB-L). Leu19, Arg20, Gly61, Lys64, Thr65, Thr66, Arg170, Tyr180, and Arg217 together coordinate ATP. Thr65 serves as a coordination point for Mg(2+). The interval 181–251 (NDEEMKEIVL…LCLKAFEKMG (71 aa)) is small ATPAse domain (RuvB-S). Positions 254-341 (DLGLDGMDRQ…ENHGQDPTLF (88 aa)) are head domain (RuvB-H). Arg309 and Arg314 together coordinate DNA.

Belongs to the RuvB family. As to quaternary structure, homohexamer. Forms an RuvA(8)-RuvB(12)-Holliday junction (HJ) complex. HJ DNA is sandwiched between 2 RuvA tetramers; dsDNA enters through RuvA and exits via RuvB. An RuvB hexamer assembles on each DNA strand where it exits the tetramer. Each RuvB hexamer is contacted by two RuvA subunits (via domain III) on 2 adjacent RuvB subunits; this complex drives branch migration. In the full resolvosome a probable DNA-RuvA(4)-RuvB(12)-RuvC(2) complex forms which resolves the HJ.

It localises to the cytoplasm. The catalysed reaction is ATP + H2O = ADP + phosphate + H(+). The RuvA-RuvB-RuvC complex processes Holliday junction (HJ) DNA during genetic recombination and DNA repair, while the RuvA-RuvB complex plays an important role in the rescue of blocked DNA replication forks via replication fork reversal (RFR). RuvA specifically binds to HJ cruciform DNA, conferring on it an open structure. The RuvB hexamer acts as an ATP-dependent pump, pulling dsDNA into and through the RuvAB complex. RuvB forms 2 homohexamers on either side of HJ DNA bound by 1 or 2 RuvA tetramers; 4 subunits per hexamer contact DNA at a time. Coordinated motions by a converter formed by DNA-disengaged RuvB subunits stimulates ATP hydrolysis and nucleotide exchange. Immobilization of the converter enables RuvB to convert the ATP-contained energy into a lever motion, pulling 2 nucleotides of DNA out of the RuvA tetramer per ATP hydrolyzed, thus driving DNA branch migration. The RuvB motors rotate together with the DNA substrate, which together with the progressing nucleotide cycle form the mechanistic basis for DNA recombination by continuous HJ branch migration. Branch migration allows RuvC to scan DNA until it finds its consensus sequence, where it cleaves and resolves cruciform DNA. The protein is Holliday junction branch migration complex subunit RuvB of Leptospira borgpetersenii serovar Hardjo-bovis (strain L550).